The primary structure comprises 212 residues: 2-C-methyl-D-erythritol 4-phosphate cytidylyltransferase (212 aa).

This sequence belongs to the IspD/TarI cytidylyltransferase family. IspD subfamily.

It carries out the reaction 2-C-methyl-D-erythritol 4-phosphate + CTP + H(+) = 4-CDP-2-C-methyl-D-erythritol + diphosphate. It functions in the pathway isoprenoid biosynthesis; isopentenyl diphosphate biosynthesis via DXP pathway; isopentenyl diphosphate from 1-deoxy-D-xylulose 5-phosphate: step 2/6. Its function is as follows. Catalyzes the formation of 4-diphosphocytidyl-2-C-methyl-D-erythritol from CTP and 2-C-methyl-D-erythritol 4-phosphate (MEP). This is 2-C-methyl-D-erythritol 4-phosphate cytidylyltransferase from Chlamydia caviae (strain ATCC VR-813 / DSM 19441 / 03DC25 / GPIC) (Chlamydophila caviae).